A 442-amino-acid polypeptide reads, in one-letter code: tRNA modification GTPase MnmE (442 aa).

Residues Arg27, Glu84, and Lys124 each contribute to the (6S)-5-formyl-5,6,7,8-tetrahydrofolate site. The region spanning 221-366 is the TrmE-type G domain; the sequence is GLHVVIVGAP…LLDALQAFAE (146 aa). GTP-binding positions include 231-236, 250-256, and 275-278; these read NAGKSS, SEEAGTT, and DTAG. Mg(2+) contacts are provided by Ser235 and Thr256. A (6S)-5-formyl-5,6,7,8-tetrahydrofolate-binding site is contributed by Lys442.

Belongs to the TRAFAC class TrmE-Era-EngA-EngB-Septin-like GTPase superfamily. TrmE GTPase family. As to quaternary structure, homodimer. Heterotetramer of two MnmE and two MnmG subunits. The cofactor is K(+).

Its subcellular location is the cytoplasm. In terms of biological role, exhibits a very high intrinsic GTPase hydrolysis rate. Involved in the addition of a carboxymethylaminomethyl (cmnm) group at the wobble position (U34) of certain tRNAs, forming tRNA-cmnm(5)s(2)U34. This chain is tRNA modification GTPase MnmE, found in Brucella ovis (strain ATCC 25840 / 63/290 / NCTC 10512).